A 371-amino-acid polypeptide reads, in one-letter code: Antibiotic efflux pump periplasmic linker protein ArpA (371 aa).

The signal sequence occupies residues 1–22 (MQFKPAVTALVSAVALATLLSG). Cys-23 carries the N-palmitoyl cysteine lipid modification. A lipid anchor (S-diacylglycerol cysteine) is attached at Cys-23. The stretch at 115-155 (LAERYKQLIDEQAVSKQEYDDANAKRLQAEASLKSAQIDLR) forms a coiled coil.

Belongs to the membrane fusion protein (MFP) (TC 8.A.1) family.

It is found in the cell inner membrane. Functionally, the periplasmic linker protein component of an antibiotic efflux pump. Confers resistance to numerous structurally unrelated antibiotics such as carbenicillin, chloramphenicol, erythromycin, novobiocin, streptomycin and tetracycline. Is not involved in organic solvent efflux. The sequence is that of Antibiotic efflux pump periplasmic linker protein ArpA (arpA) from Pseudomonas putida (Arthrobacter siderocapsulatus).